A 405-amino-acid chain; its full sequence is Subtilisin-like protease 6 (405 aa).

Residues 1 to 18 (FITKAIPIVLAALSAVNG) form the signal peptide. A propeptide spanning residues 19–125 (AKILEAGPHA…VRTSTNGTNL (107 aa)) is cleaved from the precursor. The Inhibitor I9 domain maps to 34-118 (KYIVVMKKDV…YIEPDFVVRT (85 aa)). Residues Asn121 and Asn124 are each glycosylated (N-linked (GlcNAc...) asparagine). The region spanning 133-405 (SWGLARVGSK…GEGTTGKLIY (273 aa)) is the Peptidase S8 domain. Active-site charge relay system residues include Asp165 and His196. N-linked (GlcNAc...) asparagine glycans are attached at residues Asn250 and Asn262. Residue Ser356 is the Charge relay system of the active site.

It belongs to the peptidase S8 family.

It localises to the secreted. Secreted subtilisin-like serine protease with keratinolytic activity that contributes to pathogenicity. The chain is Subtilisin-like protease 6 (SUB6) from Trichophyton schoenleinii.